The following is a 1072-amino-acid chain: Guanylyl cyclase C (1072 aa).

An N-terminal signal peptide occupies residues 1–19 (MTSLLGLAVRLLLFQPALM). Residues 20–433 (VFWASQVRQN…VPGLGPQILM (414 aa)) lie on the Extracellular side of the membrane. N-linked (GlcNAc...) asparagine glycans are attached at residues N32, N75, N79, N179, N188, N195, N284, N307, N345, and N402. A helical transmembrane segment spans residues 434–454 (IAVFTLTGILVVLLLIALLVL). Topologically, residues 455–1072 (RKYRRDHALR…NNSDHDSTYF (618 aa)) are cytoplasmic. One can recognise a Protein kinase domain in the interval 489 to 748 (LKIDDDRRRD…KIESTLAKIF (260 aa)). One can recognise a Guanylate cyclase domain in the interval 823-953 (TIYFSDIVGF…DTVNTASRME (131 aa)).

The protein belongs to the adenylyl cyclase class-4/guanylyl cyclase family. In terms of assembly, homotrimer. Interacts via its C-terminal region with NHERF4. Interacts with the lectin chaperone VIP36. In terms of processing, glycosylation at Asn-75 and/or Asn-79 is required for interaction with VIP36 while glycosylation at Asn-345 and Asn-402 modulates ligand-mediated GC-C activation.

It localises to the cell membrane. The protein localises to the endoplasmic reticulum membrane. The catalysed reaction is GTP = 3',5'-cyclic GMP + diphosphate. Functionally, guanylyl cyclase that catalyzes synthesis of cyclic GMP (cGMP) from GTP. The polypeptide is Guanylyl cyclase C (Gucy2c) (Mus musculus (Mouse)).